The sequence spans 191 residues: Pyridoxal 5'-phosphate synthase subunit PdxT (191 aa).

Position 48–50 (48–50) interacts with L-glutamine; it reads GES. Cys-81 serves as the catalytic Nucleophile. L-glutamine-binding positions include Arg-109 and 136-137; that span reads IR. Active-site charge relay system residues include His-172 and Glu-174.

The protein belongs to the glutaminase PdxT/SNO family. In terms of assembly, in the presence of PdxS, forms a dodecamer of heterodimers. Only shows activity in the heterodimer.

It carries out the reaction aldehydo-D-ribose 5-phosphate + D-glyceraldehyde 3-phosphate + L-glutamine = pyridoxal 5'-phosphate + L-glutamate + phosphate + 3 H2O + H(+). The catalysed reaction is L-glutamine + H2O = L-glutamate + NH4(+). It functions in the pathway cofactor biosynthesis; pyridoxal 5'-phosphate biosynthesis. In terms of biological role, catalyzes the hydrolysis of glutamine to glutamate and ammonia as part of the biosynthesis of pyridoxal 5'-phosphate. The resulting ammonia molecule is channeled to the active site of PdxS. This chain is Pyridoxal 5'-phosphate synthase subunit PdxT, found in Thermus thermophilus (strain ATCC BAA-163 / DSM 7039 / HB27).